We begin with the raw amino-acid sequence, 317 residues long: Porphobilinogen deaminase (317 aa).

S-(dipyrrolylmethanemethyl)cysteine is present on Cys242.

The protein belongs to the HMBS family. Monomer. Dipyrromethane is required as a cofactor.

The catalysed reaction is 4 porphobilinogen + H2O = hydroxymethylbilane + 4 NH4(+). It participates in porphyrin-containing compound metabolism; protoporphyrin-IX biosynthesis; coproporphyrinogen-III from 5-aminolevulinate: step 2/4. In terms of biological role, tetrapolymerization of the monopyrrole PBG into the hydroxymethylbilane pre-uroporphyrinogen in several discrete steps. This is Porphobilinogen deaminase from Colwellia psychrerythraea (strain 34H / ATCC BAA-681) (Vibrio psychroerythus).